Reading from the N-terminus, the 1198-residue chain is Tetratricopeptide repeat protein 17 (1198 aa).

A TPR 1 repeat occupies Phe295 to Phe328. Positions Cys340–His382 form a coiled coil. TPR repeat units follow at residues Trp619–Gln652 and Pro689–Cys722. 2 disordered regions span residues Leu774–Ser793 and Val902–Leu954. Basic residues predominate over residues Val902 to Gly914. TPR repeat units follow at residues Ser1071–Gln1105, Asp1108–Phe1141, and Ala1142–Phe1175.

This sequence belongs to the TTC17 family. Interacts with CATIP.

The protein localises to the cytoplasm. The protein resides in the cell membrane. It localises to the cytoskeleton. In terms of biological role, plays a role in primary ciliogenesis by modulating actin polymerization. The sequence is that of Tetratricopeptide repeat protein 17 (Ttc17) from Mus musculus (Mouse).